The sequence spans 457 residues: MEELVSVILAAGLGKRMKSKYPKVVHKVCGKPMVKWVVEAAQEAGSKEVIVVVGHGREMVEEVLGDEVKYAYQKVQLGTGHAVMMAEEFLPLEGMVLILTGDTPLITSDTLRKLVEYHISEGNDVTILSSIFDDPTGYGRIIRDESGNVVKIVEEKDASEEEKRVKEINSGMYVVDIAKLRAALKEITNDNAQGEYYLTDAVEIIRNMGGKIGAVVGESEEIIGVNSRVQLSNAEKVMRRRINEKHMENGVTIIDPDSTYIDAEVEIGRDTVILPGTILQGKTKIGEDCEIGPNSRIVDSTIGNGCNVMYSVVLSSSVGNNVKIGPFAHIRPESVIKNNVKIGDFVEIKKSVIDEGSKVPHLTYVGDAELGKNVNMGCGSITVNYDGKQKHKTIIGDNVFVGCNVNLVAPVKIGNNAYIAAGSTITEDVPEGALAIARSRQTNKEGWVEERIKKGRL.

The interval M1–R228 is pyrophosphorylase. Residues L9–G12, K23, Q73, and G78–T79 each bind UDP-N-acetyl-alpha-D-glucosamine. D102 provides a ligand contact to Mg(2+). UDP-N-acetyl-alpha-D-glucosamine is bound by residues G139, E154, N169, and N226. N226 lines the Mg(2+) pocket. A linker region spans residues V229 to N249. The segment at G250 to L457 is N-acetyltransferase. Residues R331 and K349 each contribute to the UDP-N-acetyl-alpha-D-glucosamine site. The active-site Proton acceptor is the H361. UDP-N-acetyl-alpha-D-glucosamine is bound by residues Y364 and N375. Acetyl-CoA is bound by residues N384 to Y385, A421, and R438.

The protein in the N-terminal section; belongs to the N-acetylglucosamine-1-phosphate uridyltransferase family. In the C-terminal section; belongs to the transferase hexapeptide repeat family. As to quaternary structure, homotrimer. Mg(2+) is required as a cofactor.

It localises to the cytoplasm. The catalysed reaction is alpha-D-glucosamine 1-phosphate + acetyl-CoA = N-acetyl-alpha-D-glucosamine 1-phosphate + CoA + H(+). It carries out the reaction N-acetyl-alpha-D-glucosamine 1-phosphate + UTP + H(+) = UDP-N-acetyl-alpha-D-glucosamine + diphosphate. Its pathway is nucleotide-sugar biosynthesis; UDP-N-acetyl-alpha-D-glucosamine biosynthesis; N-acetyl-alpha-D-glucosamine 1-phosphate from alpha-D-glucosamine 6-phosphate (route II): step 2/2. It functions in the pathway nucleotide-sugar biosynthesis; UDP-N-acetyl-alpha-D-glucosamine biosynthesis; UDP-N-acetyl-alpha-D-glucosamine from N-acetyl-alpha-D-glucosamine 1-phosphate: step 1/1. It participates in bacterial outer membrane biogenesis; LPS lipid A biosynthesis. Catalyzes the last two sequential reactions in the de novo biosynthetic pathway for UDP-N-acetylglucosamine (UDP-GlcNAc). The C-terminal domain catalyzes the transfer of acetyl group from acetyl coenzyme A to glucosamine-1-phosphate (GlcN-1-P) to produce N-acetylglucosamine-1-phosphate (GlcNAc-1-P), which is converted into UDP-GlcNAc by the transfer of uridine 5-monophosphate (from uridine 5-triphosphate), a reaction catalyzed by the N-terminal domain. In Caldanaerobacter subterraneus subsp. tengcongensis (strain DSM 15242 / JCM 11007 / NBRC 100824 / MB4) (Thermoanaerobacter tengcongensis), this protein is Bifunctional protein GlmU.